The sequence spans 558 residues: Acylase ACY 1 proenzyme (558 aa).

Catalysis depends on threonine 368, which acts as the Nucleophile.

This sequence belongs to the gamma-glutamyltransferase family. In terms of assembly, dimer of two non-identical chains processed from the same precursor.

The catalysed reaction is (7R)-7-(4-carboxybutanamido)cephalosporanate + H2O = (7R)-7-aminocephalosporanate + glutarate. It carries out the reaction an N-terminal (5-L-glutamyl)-[peptide] + an alpha-amino acid = 5-L-glutamyl amino acid + an N-terminal L-alpha-aminoacyl-[peptide]. It catalyses the reaction glutathione + H2O = L-cysteinylglycine + L-glutamate. The enzyme catalyses an S-substituted glutathione + H2O = an S-substituted L-cysteinylglycine + L-glutamate. In terms of biological role, besides the cephalosporin acylase I activity which converts GL-7ACA into 7-ACA; this enzyme displays some gamma glutamyltranspeptidase activity. The sequence is that of Acylase ACY 1 proenzyme (acyI) from Pseudomonas sp. (strain V22).